We begin with the raw amino-acid sequence, 523 residues long: ATP-dependent RNA helicase DBP3 (523 aa).

Basic and acidic residues predominate over residues 1 to 21; that stretch reads MTKEEIADKKRKVVDEEVIEK. The tract at residues 1–71 is disordered; that stretch reads MTKEEIADKK…SEKKPEPTSA (71 aa). The segment covering 22–48 has biased composition (basic residues); sequence KKSKKHKKDKKDKKEKKDKKHKKHKKE. The segment covering 49–67 has biased composition (basic and acidic residues); it reads KKGEKEVEVPEKESEKKPE. The Q motif signature appears at 114-140; that stretch reads LSFDYLSLDSSIQAEISKFPKPTPIQA. One can recognise a Helicase ATP-binding domain in the interval 143–315; that stretch reads WPYLLSGKDV…STFMNNPIKV (173 aa). 156–163 is a binding site for ATP; it reads AETGSGKT. A DEAD box motif is present at residues 262–265; that stretch reads DEAD. Positions 344-493 constitute a Helicase C-terminal domain; it reads KLLELLKKYH…PVPEDLIKFG (150 aa).

Belongs to the DEAD box helicase family. DDX5/DBP2 subfamily.

It is found in the nucleus. Its subcellular location is the nucleolus. The catalysed reaction is ATP + H2O = ADP + phosphate + H(+). In terms of biological role, ATP-dependent RNA helicase required for 60S ribosomal subunit synthesis. Involved in efficient pre-rRNA processing, predominantly at site A3, which is necessary for the normal formation of 25S and 5.8S rRNAs. The protein is ATP-dependent RNA helicase DBP3 (DBP3) of Saccharomyces cerevisiae (strain ATCC 204508 / S288c) (Baker's yeast).